Reading from the N-terminus, the 308-residue chain is Glycine betaine uptake system ATP-binding protein YehX (308 aa).

Positions 2–235 (IEFSHVSKLF…PANDFVRQFF (234 aa)) constitute an ABC transporter domain. 34–41 (GTSGSGKS) lines the ATP pocket.

Belongs to the ABC transporter superfamily. The complex is composed of two ATP-binding proteins (YehX), two transmembrane proteins (YehW and YehY) and a solute-binding protein (YehZ).

The enzyme catalyses glycine betaine(out) + ATP + H2O = glycine betaine(in) + ADP + phosphate + H(+). Part of an ABC transporter complex involved in low-affinity glycine betaine uptake. Probably responsible for energy coupling to the transport system. This chain is Glycine betaine uptake system ATP-binding protein YehX (yehX), found in Escherichia coli (strain K12).